Consider the following 516-residue polypeptide: L-amino acid oxidase (516 aa).

Positions 1–18 (MNVFFMFSLLFLAALESC) are cleaved as a signal peptide. FAD contacts are provided by residues 61–62 (MS), 81–82 (EA), Arg-89, and 105–108 (GPMR). Position 108 (Arg-108) interacts with substrate. The N-linked (GlcNAc...) asparagine glycan is linked to Asn-190. Val-279 contributes to the FAD binding site. Asn-299 and Asn-404 each carry an N-linked (GlcNAc...) asparagine glycan. Cys-349 and Cys-430 are disulfide-bonded. Residues Glu-475 and 482 to 487 (GWIDST) each bind FAD. Position 482 to 483 (482 to 483 (GW)) interacts with substrate.

It belongs to the flavin monoamine oxidase family. FIG1 subfamily. Homodimer; non-covalently linked. FAD serves as cofactor. N-glycosylated (14%). The enzymatic activity remains unchanged after deglycosylation. As to expression, expressed by the venom gland.

The protein localises to the secreted. It catalyses the reaction an L-alpha-amino acid + O2 + H2O = a 2-oxocarboxylate + H2O2 + NH4(+). The enzyme catalyses L-leucine + O2 + H2O = 4-methyl-2-oxopentanoate + H2O2 + NH4(+). It carries out the reaction L-phenylalanine + O2 + H2O = 3-phenylpyruvate + H2O2 + NH4(+). The catalysed reaction is L-tryptophan + O2 + H2O = indole-3-pyruvate + H2O2 + NH4(+). It catalyses the reaction L-methionine + O2 + H2O = 4-methylsulfanyl-2-oxobutanoate + H2O2 + NH4(+). The enzyme catalyses L-isoleucine + O2 + H2O = (S)-3-methyl-2-oxopentanoate + H2O2 + NH4(+). Its activity is regulated as follows. Inhibited by the substrate analog N-acetyl tryptophan. In terms of biological role, catalyzes an oxidative deamination of predominantly hydrophobic and aromatic L-amino acids, thus producing hydrogen peroxide that may contribute to the diverse toxic effects of this enzyme. Is highly active on L-Met&gt;L-Leu&gt;L-Phe&gt;L-Trp=L-Ile. Binds to the cell surface and enables the production of highly localized concentration of hydrogen peroxide in or near the binding interfaces. Does not bind to phospholipids. Induces platelet-rich plasma aggregation, shows cytotoxic effects on some cancer cell lines (B16-F10 (mouse melanoma), PC12 (rat pheochromocytoma), MCF-7 and MDA-MB-231 (human breast carcinoma)) and shows antibacterial activities against both Gram-positive and Gram-negative bacteria. Also exhibits hemorrhage and edema. Does not show cytotoxicity on erythrocytes and peripheral blood mononuclear cells. Its effect on platelets is controversial, since it either induces aggregation or inhibits agonist-induced aggregation. These different effects are probably due to different experimental conditions. This is L-amino acid oxidase from Cerastes cerastes (Horned desert viper).